Consider the following 79-residue polypeptide: RNA-binding protein Hfq (79 aa).

In terms of domain architecture, Sm spans 10 to 70; that stretch reads DVFLNTVRKQ…ISTIMPGQPV (61 aa).

Belongs to the Hfq family. In terms of assembly, homohexamer.

RNA chaperone that binds small regulatory RNA (sRNAs) and mRNAs to facilitate mRNA translational regulation in response to envelope stress, environmental stress and changes in metabolite concentrations. Also binds with high specificity to tRNAs. The polypeptide is RNA-binding protein Hfq (Bartonella tribocorum (strain CIP 105476 / IBS 506)).